Here is a 76-residue protein sequence, read N- to C-terminus: Large ribosomal subunit protein bL31 (76 aa).

Zn(2+)-binding residues include C16, C18, C36, and C39.

The protein belongs to the bacterial ribosomal protein bL31 family. Type A subfamily. In terms of assembly, part of the 50S ribosomal subunit. Zn(2+) serves as cofactor.

Its function is as follows. Binds the 23S rRNA. The polypeptide is Large ribosomal subunit protein bL31 (Syntrophobacter fumaroxidans (strain DSM 10017 / MPOB)).